The sequence spans 359 residues: Peptide chain release factor 1 (359 aa).

N5-methylglutamine is present on Gln235.

This sequence belongs to the prokaryotic/mitochondrial release factor family. Post-translationally, methylated by PrmC. Methylation increases the termination efficiency of RF1.

Its subcellular location is the cytoplasm. Peptide chain release factor 1 directs the termination of translation in response to the peptide chain termination codons UAG and UAA. The polypeptide is Peptide chain release factor 1 (Polynucleobacter necessarius subsp. necessarius (strain STIR1)).